The primary structure comprises 962 residues: Protease 3 (962 aa).

The N-terminal stretch at 1 to 23 is a signal peptide; the sequence is MPRSTWFKALLLLVALWAPLSQA. H88 provides a ligand contact to Zn(2+). The Proton acceptor role is filled by E91. H92 and E169 together coordinate Zn(2+).

It belongs to the peptidase M16 family. As to quaternary structure, monomer. The cofactor is Zn(2+).

It is found in the periplasm. It catalyses the reaction Preferential cleavage of 16-Tyr-|-Leu-17 and 25-Phe-|-Tyr-26 bonds of oxidized insulin B chain. Also acts on other substrates of Mw less than 7 kDa such as insulin and glucagon.. Endopeptidase that degrades small peptides of less than 7 kDa, such as glucagon and insulin. This Escherichia coli (strain K12) protein is Protease 3 (ptrA).